The primary structure comprises 429 residues: Glutamate dehydrogenase B (429 aa).

The tract at residues 1–20 is disordered; that stretch reads MAQTPPPESAPSTDSEPETA. The active site involves lysine 119.

It belongs to the Glu/Leu/Phe/Val dehydrogenases family. In terms of assembly, homohexamer.

This Halobacterium salinarum (strain ATCC 700922 / JCM 11081 / NRC-1) (Halobacterium halobium) protein is Glutamate dehydrogenase B (gdhB).